Here is a 215-residue protein sequence, read N- to C-terminus: Cytochrome b6 (215 aa).

Residues 32–52 (IFYCLGGITFTCFLLQVASGF) traverse the membrane as a helical segment. Cysteine 35 lines the heme c pocket. Residues histidine 86 and histidine 100 each contribute to the heme b site. 3 helical membrane passes run 90–110 (ASMMVLTMILHVFRVYLTGGF), 116–136 (LTWVTGVILAVLTVSFGVTGY), and 186–206 (LHTFILPLLTAVFMLMHFLMI). Residues histidine 187 and histidine 202 each contribute to the heme b site.

Belongs to the cytochrome b family. PetB subfamily. The 4 large subunits of the cytochrome b6-f complex are cytochrome b6, subunit IV (17 kDa polypeptide, PetD), cytochrome f and the Rieske protein, while the 4 small subunits are PetG, PetL, PetM and PetN. The complex functions as a dimer. The cofactor is heme b. Heme c is required as a cofactor.

The protein localises to the plastid. It is found in the chloroplast thylakoid membrane. In terms of biological role, component of the cytochrome b6-f complex, which mediates electron transfer between photosystem II (PSII) and photosystem I (PSI), cyclic electron flow around PSI, and state transitions. The protein is Cytochrome b6 of Coleochaete orbicularis (Charophycean green alga).